The sequence spans 875 residues: Importin subunit beta-1 (875 aa).

Methionine 1 is modified (N-acetylmethionine). HEAT repeat units lie at residues 2 to 31, 33 to 64, 84 to 122, 128 to 159, and 169 to 201; these read ELIT…AAVE, LPTF…IRLL, ANAR…EIPV, LIPQ…ICQD, and SNEI…LNSL. Serine 12 is modified (phosphoserine). The 80-residue stretch at 21 to 100 folds into the Importin N-terminal domain; the sequence is AQKFLERAAV…KNYVLQTLGT (80 aa). Lysine 210 bears the N6-acetyllysine mark. HEAT repeat units lie at residues 211 to 246, 252 to 301, 313 to 359, 363 to 393, 401 to 437, 448 to 484, 499 to 536, 543 to 591, 599 to 638, 643 to 680, 685 to 723, 731 to 775, 785 to 828, and 830 to 872; these read ESER…IMSL, ETYM…EAAE, YAKG…TCCE, VPHV…GSIL, LKPL…ICEL, LAPL…YEAA, SSSF…EIVK, YPAV…QNVL, ALQI…VEVL, LKYM…CRAL, LPFC…TLAI, LEVV…VQGL, DVML…CTAF, and KDVL…RKLK. The essential for high affinity interaction with RPL23A stretch occupies residues 285–461; it reads VCDEEMDLAI…LQCLIEGLSA (177 aa). An IAB-binding region spans residues 328-341; sequence TLTKQDENDDDDDW. A ran-GTP binding region spans residues 333–418; the sequence is DENDDDDDWN…MPTLIELMKD (86 aa). N6-acetyllysine is present on residues lysine 834 and lysine 866.

The protein belongs to the importin beta family. Importin beta-1 subfamily. As to quaternary structure, forms a complex with an importin alpha subunit. Interacts with XPO1. Forms a heterodimer with IPO7. The KPNB1/IPO7 heterodimer interacts with H1 histone. Interacts with SNUPN. Interacts with H2A, H2B, H3 and H4 histones. Component of an import snRNP complex composed of KPNB1, SNUPN, SMN1 and ZNF259. Component of a nuclear export receptor complex composed of KPNB1, Ran, SNUPN and XPO1. Interacts with SRY. Interacts with PRKCI/atypical protein kinase C iota. Interacts with KPNA2. Interacts with KPNA7. Interacts with SNAI1 (via zinc fingers) and SNAI2 (via zinc fingers). Interacts with SLC35G1 and STIM1. Interacts with DCAF8. Interacts with RAN. Interacts with NUMA1 (via C-terminus); this interaction is inhibited by RanGTP. Interacts with ZBED1/hDREF; required for nuclear import of ZBED1/hDREF. Interacts with SRP19. Interacts with RPL23A (via BIB domain), RPS7 and RPL5. Mono-ADP-ribosylated by PARP16.

The protein localises to the cytoplasm. It localises to the nucleus envelope. In terms of biological role, functions in nuclear protein import, either in association with an adapter protein, like an importin-alpha subunit, which binds to nuclear localization signals (NLS) in cargo substrates, or by acting as autonomous nuclear transport receptor. Acting autonomously, serves itself as NLS receptor. Docking of the importin/substrate complex to the nuclear pore complex (NPC) is mediated by KPNB1 through binding to nucleoporin FxFG repeats and the complex is subsequently translocated through the pore by an energy requiring, Ran-dependent mechanism. At the nucleoplasmic side of the NPC, Ran binds to importin-beta and the three components separate and importin-alpha and -beta are re-exported from the nucleus to the cytoplasm where GTP hydrolysis releases Ran from importin. The directionality of nuclear import is thought to be conferred by an asymmetric distribution of the GTP- and GDP-bound forms of Ran between the cytoplasm and nucleus. Mediates autonomously the nuclear import of ribosomal proteins RPL23A, RPS7 and RPL5. In association with IPO7, mediates the nuclear import of H1 histone. In vitro, mediates nuclear import of H2A, H2B, H3 and H4 histones. Imports MRTFA, SNAI1 and PRKCI into the nucleus. The sequence is that of Importin subunit beta-1 (Kpnb1) from Rattus norvegicus (Rat).